The primary structure comprises 220 residues: Ribosome maturation factor RimM (220 aa).

The 78-residue stretch at 143-220 (EGEFYWVDLI…RIVVDWGLDY (78 aa)) folds into the PRC barrel domain.

It belongs to the RimM family. In terms of assembly, binds ribosomal protein uS19.

Its subcellular location is the cytoplasm. An accessory protein needed during the final step in the assembly of 30S ribosomal subunit, possibly for assembly of the head region. Essential for efficient processing of 16S rRNA. May be needed both before and after RbfA during the maturation of 16S rRNA. It has affinity for free ribosomal 30S subunits but not for 70S ribosomes. This is Ribosome maturation factor RimM from Cupriavidus metallidurans (strain ATCC 43123 / DSM 2839 / NBRC 102507 / CH34) (Ralstonia metallidurans).